Consider the following 642-residue polypeptide: Core protein VP4 (642 aa).

Belongs to the orbivirus VP4 family.

It localises to the virion. In terms of biological role, the VP4 protein is one of the five proteins (with VP1, VP3, VP6 and VP7) which form the inner capsid of the virus. This chain is Core protein VP4 (Segment-4), found in African horse sickness virus (AHSV).